The sequence spans 573 residues: Probable D-xylulose kinase A (573 aa).

Substrate-binding residues include H100, R171, D287, and N288. ATP is bound by residues W368, 473–474, and N477; that span reads GG.

Belongs to the FGGY kinase family.

It is found in the cytoplasm. The enzyme catalyses D-xylulose + ATP = D-xylulose 5-phosphate + ADP + H(+). Its function is as follows. Highly specific D-xylulose kinase which participates in the catabolism of xylose. Xylose is a major component of hemicelluloses such as xylan. Most fungi utilize D-xylose via three enzymatic reactions, xylose reductase (XR), xylitol dehydrogenase (XDH), and xylulokinase, to form xylulose 5-phosphate, which enters pentose phosphate pathway. This is Probable D-xylulose kinase A (xkiA) from Aspergillus terreus (strain NIH 2624 / FGSC A1156).